Consider the following 776-residue polypeptide: Transcription factor MYB3R-1 (776 aa).

Residues 1-41 (MKREMKAPTTPLESLQGDLKGKQGRTSGPARRSTKGQWTPE) form a disordered region. HTH myb-type domains are found at residues 30–81 (ARRS…QKVL), 82–137 (NPEL…NPGI), and 138–188 (NKNA…KKKL). 3 DNA-binding regions (H-T-H motif) span residues 58–81 (WKKI…QKVL), 110–133 (WSTI…HNHL), and 161–184 (WAEL…NSSV). 3 disordered regions span residues 217–253 (SSWM…STND), 364–384 (FQSS…TDPE), and 401–435 (DNMK…AETH). Polar residues-rich tracts occupy residues 240–253 (CSQA…STND), 364–380 (FQSS…SNSD), and 423–432 (GKGSLCSQAA). Residues 648–655 (KKRHRDLL) carry the Nuclear localization signal motif.

Component of a DREAM-like complex which modulates a variety of developmentally regulated genes and of the mitotic genes in proliferating and differentiated cells. In terms of tissue distribution, expressed ubiquitously at low levels. Expressed in roots, cotyledons, flowers and leaves, especially in vascular tissues.

Its subcellular location is the nucleus. In terms of biological role, transcription factor that binds 5'-AACGG-3' motifs in gene promoters. Transcription activator involved in the regulation of cytokinesis, probably via the activation of several G2/M phase-specific genes transcription (e.g. KNOLLE). Transcription repressor that regulates organ growth. Binds to the promoters of G2/M-specific genes and to E2F target genes to prevent their expression in post-mitotic cells and to restrict the time window of their expression in proliferating cells. Required for the maintenance of diploidy. This chain is Transcription factor MYB3R-1, found in Arabidopsis thaliana (Mouse-ear cress).